We begin with the raw amino-acid sequence, 573 residues long: Proline--tRNA ligase (573 aa).

Belongs to the class-II aminoacyl-tRNA synthetase family. ProS type 1 subfamily. As to quaternary structure, homodimer.

The protein resides in the cytoplasm. The enzyme catalyses tRNA(Pro) + L-proline + ATP = L-prolyl-tRNA(Pro) + AMP + diphosphate. Functionally, catalyzes the attachment of proline to tRNA(Pro) in a two-step reaction: proline is first activated by ATP to form Pro-AMP and then transferred to the acceptor end of tRNA(Pro). As ProRS can inadvertently accommodate and process non-cognate amino acids such as alanine and cysteine, to avoid such errors it has two additional distinct editing activities against alanine. One activity is designated as 'pretransfer' editing and involves the tRNA(Pro)-independent hydrolysis of activated Ala-AMP. The other activity is designated 'posttransfer' editing and involves deacylation of mischarged Ala-tRNA(Pro). The misacylated Cys-tRNA(Pro) is not edited by ProRS. This is Proline--tRNA ligase from Citrifermentans bemidjiense (strain ATCC BAA-1014 / DSM 16622 / JCM 12645 / Bem) (Geobacter bemidjiensis).